The following is a 432-amino-acid chain: 5'-deoxyadenosine deaminase (432 aa).

Zn(2+)-binding residues include histidine 63 and histidine 65. Residues glutamate 92 and histidine 184 each coordinate substrate. Residue histidine 211 coordinates Zn(2+). 2 residues coordinate substrate: glutamate 214 and aspartate 299. A Zn(2+)-binding site is contributed by aspartate 299.

This sequence belongs to the metallo-dependent hydrolases superfamily. MTA/SAH deaminase family. In terms of assembly, homotetramer. The cofactor is Zn(2+).

It carries out the reaction 5'-deoxyadenosine + H2O + H(+) = 5'-deoxyinosine + NH4(+). It catalyses the reaction S-adenosyl-L-homocysteine + H2O + H(+) = S-inosyl-L-homocysteine + NH4(+). The enzyme catalyses S-methyl-5'-thioadenosine + H2O + H(+) = S-methyl-5'-thioinosine + NH4(+). The catalysed reaction is adenosine + H2O + H(+) = inosine + NH4(+). The protein operates within amino-acid biosynthesis; S-adenosyl-L-methionine biosynthesis. Functionally, catalyzes the deamination of three SAM-derived enzymatic products, namely 5'-deoxyadenosine, S-adenosyl-L-homocysteine, and 5'-methylthioadenosine, to produce the inosine analogs. Can also deaminate adenosine. The preferred substrate for this enzyme is 5'-deoxyadenosine, but all these substrates are efficiently deaminated. Likely functions in a S-adenosyl-L-methionine (SAM) recycling pathway from S-adenosyl-L-homocysteine (SAH) produced from SAM-dependent methylation reactions. May also be involved in the recycling of 5'-deoxyadenosine, whereupon the 5'-deoxyribose moiety of 5'-deoxyinosine is further metabolized to deoxyhexoses used for the biosynthesis of aromatic amino acids in methanogens. In Methanosarcina barkeri (strain Fusaro / DSM 804), this protein is 5'-deoxyadenosine deaminase.